A 144-amino-acid chain; its full sequence is Monobin (144 aa).

The first 16 residues, M1–A16, serve as a signal peptide directing secretion. At Q17 the chain carries Pyrrolidone carboxylic acid. The 56-residue stretch at R18–Q73 folds into the BPTI/Kunitz inhibitor 1 domain. 3 disulfides stabilise this stretch: C22/C70, C31/C53, and C47/C66. The segment at G74–G85 is linker. The BPTI/Kunitz inhibitor domain maps to C86 to C139. Intrachain disulfides connect C86–C139, C95–C120, and C112–C135. The Cell attachment site motif lies at R92–D94.

The N-terminus is blocked. As to expression, expressed in salivary glands.

It is found in the cytoplasmic vesicle. The protein resides in the secretory vesicle. The protein localises to the secreted. In terms of biological role, tick salivary thrombin inhibitor that plays an important part in the anti-hemostatic strategy of ticks. This Argas monolakensis (Mono lake bird tick) protein is Monobin.